Consider the following 305-residue polypeptide: UDP-3-O-acyl-N-acetylglucosamine deacetylase (305 aa).

His-79, His-238, and Asp-242 together coordinate Zn(2+). Residue His-265 is the Proton donor of the active site.

It belongs to the LpxC family. Zn(2+) is required as a cofactor.

It catalyses the reaction a UDP-3-O-[(3R)-3-hydroxyacyl]-N-acetyl-alpha-D-glucosamine + H2O = a UDP-3-O-[(3R)-3-hydroxyacyl]-alpha-D-glucosamine + acetate. Its pathway is glycolipid biosynthesis; lipid IV(A) biosynthesis; lipid IV(A) from (3R)-3-hydroxytetradecanoyl-[acyl-carrier-protein] and UDP-N-acetyl-alpha-D-glucosamine: step 2/6. Functionally, catalyzes the hydrolysis of UDP-3-O-myristoyl-N-acetylglucosamine to form UDP-3-O-myristoylglucosamine and acetate, the committed step in lipid A biosynthesis. The sequence is that of UDP-3-O-acyl-N-acetylglucosamine deacetylase from Salmonella paratyphi A (strain ATCC 9150 / SARB42).